Reading from the N-terminus, the 261-residue chain is Thioesterase TesA (261 aa).

The interval 1 to 24 (MLARHGPRYGGSVNGHSDDSSGDA) is disordered. Residues Ser104, Asp208, and His236 contribute to the active site.

It belongs to the thioesterase family.

The catalysed reaction is a fatty acyl-CoA + H2O = a fatty acid + CoA + H(+). In terms of biological role, involved in the synthesis of both phthiocerol dimycocerosates (PDIMs) and phenolic glycolipids (PGLs), which are structurally related lipids non-covalently bound to the outer cell wall layer of M.tuberculosis and are important virulence factors. The polypeptide is Thioesterase TesA (tesA) (Mycobacterium bovis (strain ATCC BAA-935 / AF2122/97)).